We begin with the raw amino-acid sequence, 451 residues long: MVGSALRRGAHAYVYLVSKASHISRGHQHQAWGSRPPAAECATQRAPGSVVELLGKSYPQDDHSNLTRKVLTRVGRNLHNQQHHPLWLIKERVKEHFYKQYVGRFGTPLFSVYDNLSPVVTTWQNFDSLLIPADHPSRKKGDNYYLNRTHMLRAHTSAHQWDLLHAGLDAFLVVGDVYRRDQIDSQHYPIFHQLEAVRLFSKHELFAGIKDGESLQLFEQSSRSAHKQETHTMEAVKLVEFDLKQTLTRLMAHLFGDELEIRWVDCYFPFTHPSFEMEINFHGEWLEVLGCGVMEQQLVNSAGAQDRIGWAFGLGLERLAMILYDIPDIRLFWCEDERFLKQFCVSNINQKVKFQPLSKYPAVINDISFWLPSENYAENDFYDLVRTIGGDLVEKVDLIDKFVHPKTHKTSHCYRITYRHMERTLSQREVRHIHQALQEAAVQLLGVEGRF.

Residues 157–160 (SAHQ), Arg179, 186–188 (QHY), and 193–195 (QLE) each bind substrate. Lys202 is subject to N6-acetyllysine. Substrate is bound by residues Glu287 and Phe312. Residues 358–450 (SKYPAVINDI…AVQLLGVEGR (93 aa)) form the FDX-ACB domain.

Belongs to the class-II aminoacyl-tRNA synthetase family. Monomer.

It localises to the mitochondrion matrix. The protein localises to the mitochondrion. It catalyses the reaction tRNA(Phe) + L-phenylalanine + ATP = L-phenylalanyl-tRNA(Phe) + AMP + diphosphate + H(+). In terms of biological role, is responsible for the charging of tRNA(Phe) with phenylalanine in mitochondrial translation. To a lesser extent, also catalyzes direct attachment of m-Tyr (an oxidized version of Phe) to tRNA(Phe), thereby opening the way for delivery of the misacylated tRNA to the ribosome and incorporation of ROS-damaged amino acid into proteins. The polypeptide is Phenylalanine--tRNA ligase, mitochondrial (FARS2) (Homo sapiens (Human)).